Here is a 161-residue protein sequence, read N- to C-terminus: 3-isopropylmalate dehydratase small subunit (161 aa).

It belongs to the LeuD family. LeuD type 2 subfamily. In terms of assembly, heterodimer of LeuC and LeuD.

It carries out the reaction (2R,3S)-3-isopropylmalate = (2S)-2-isopropylmalate. The protein operates within amino-acid biosynthesis; L-leucine biosynthesis; L-leucine from 3-methyl-2-oxobutanoate: step 2/4. In terms of biological role, catalyzes the isomerization between 2-isopropylmalate and 3-isopropylmalate, via the formation of 2-isopropylmaleate. The polypeptide is 3-isopropylmalate dehydratase small subunit (Metallosphaera sedula (strain ATCC 51363 / DSM 5348 / JCM 9185 / NBRC 15509 / TH2)).